The following is a 626-amino-acid chain: 1-deoxy-D-xylulose-5-phosphate synthase 2 (626 aa).

Residues H74 and 115-117 (GHA) contribute to the thiamine diphosphate site. D146 serves as a coordination point for Mg(2+). Thiamine diphosphate-binding positions include 147-148 (GS), N175, F286, and E368. A Mg(2+)-binding site is contributed by N175.

The protein belongs to the transketolase family. DXPS subfamily. In terms of assembly, homodimer. It depends on Mg(2+) as a cofactor. Requires thiamine diphosphate as cofactor.

It carries out the reaction D-glyceraldehyde 3-phosphate + pyruvate + H(+) = 1-deoxy-D-xylulose 5-phosphate + CO2. It participates in metabolic intermediate biosynthesis; 1-deoxy-D-xylulose 5-phosphate biosynthesis; 1-deoxy-D-xylulose 5-phosphate from D-glyceraldehyde 3-phosphate and pyruvate: step 1/1. In terms of biological role, catalyzes the acyloin condensation reaction between C atoms 2 and 3 of pyruvate and glyceraldehyde 3-phosphate to yield 1-deoxy-D-xylulose-5-phosphate (DXP). The chain is 1-deoxy-D-xylulose-5-phosphate synthase 2 from Geobacter sulfurreducens (strain ATCC 51573 / DSM 12127 / PCA).